The sequence spans 118 residues: Myotrophin (118 aa).

3 ANK repeats span residues 1–30, 34–65, and 67–98; these read MGDKEFMWALKNGDLDAVKEFVAGGVDVNR, GGRKPLHYAADCGQDEIVEFLLAKGANINAAD, and HGITPLLSACYEGHRKCVELFVSKGADKNVKG.

It belongs to the myotrophin family.

Its subcellular location is the cytoplasm. The protein localises to the nucleus. The protein resides in the perinuclear region. Its function is as follows. Regulates NF-kappa-B transcription factor activity. Promotes growth of cardiomyocytes, but not cardiomyocyte proliferation. Promotes cardiac muscle hypertrophy. Plays a role in the regulation of the growth of actin filaments. Inhibits the activity of the F-actin-capping protein complex. The polypeptide is Myotrophin (mtpn) (Xenopus laevis (African clawed frog)).